An 860-amino-acid chain; its full sequence is Leucine--tRNA ligase (860 aa).

The 'HIGH' region motif lies at 42–52 (PYPSGRLHMGH). The 'KMSKS' region motif lies at 619–623 (KMSKS). Lys-622 contacts ATP.

The protein belongs to the class-I aminoacyl-tRNA synthetase family.

It localises to the cytoplasm. The catalysed reaction is tRNA(Leu) + L-leucine + ATP = L-leucyl-tRNA(Leu) + AMP + diphosphate. This Escherichia coli (strain 55989 / EAEC) protein is Leucine--tRNA ligase.